Reading from the N-terminus, the 919-residue chain is Phosphoenolpyruvate carboxylase (919 aa).

Residues His138 and Lys579 contribute to the active site.

The protein belongs to the PEPCase type 1 family. Mg(2+) is required as a cofactor.

It carries out the reaction oxaloacetate + phosphate = phosphoenolpyruvate + hydrogencarbonate. Activity not stimulated by acetyl-CoA in the absence of any allosteric inhibitor, while the corresponding protein from E.coli is strongly stimulated. Its function is as follows. Forms oxaloacetate, a four-carbon dicarboxylic acid source for the tricarboxylic acid cycle. The chain is Phosphoenolpyruvate carboxylase (ppc) from Corynebacterium glutamicum (strain ATCC 13032 / DSM 20300 / JCM 1318 / BCRC 11384 / CCUG 27702 / LMG 3730 / NBRC 12168 / NCIMB 10025 / NRRL B-2784 / 534).